We begin with the raw amino-acid sequence, 662 residues long: UvrABC system protein B (662 aa).

Positions 31–188 constitute a Helicase ATP-binding domain; the sequence is DNIEGGEKAQ…NDLVDIQFER (158 aa). Residue 44–51 participates in ATP binding; that stretch reads GATGTGKT. The Beta-hairpin motif lies at 97 to 120; sequence YYDYYQPEAYVPSSDTYIEKDSSV. The region spanning 435-601 is the Helicase C-terminal domain; it reads QIDDLLGEIN…TIKKEIRDLI (167 aa). The UVR domain maps to 626-661; sequence KELVKKLEKQMQEAVEVLDFELAAQIRDMMLEVKAL.

It belongs to the UvrB family. Forms a heterotetramer with UvrA during the search for lesions. Interacts with UvrC in an incision complex.

It localises to the cytoplasm. Functionally, the UvrABC repair system catalyzes the recognition and processing of DNA lesions. A damage recognition complex composed of 2 UvrA and 2 UvrB subunits scans DNA for abnormalities. Upon binding of the UvrA(2)B(2) complex to a putative damaged site, the DNA wraps around one UvrB monomer. DNA wrap is dependent on ATP binding by UvrB and probably causes local melting of the DNA helix, facilitating insertion of UvrB beta-hairpin between the DNA strands. Then UvrB probes one DNA strand for the presence of a lesion. If a lesion is found the UvrA subunits dissociate and the UvrB-DNA preincision complex is formed. This complex is subsequently bound by UvrC and the second UvrB is released. If no lesion is found, the DNA wraps around the other UvrB subunit that will check the other stand for damage. This Streptococcus pneumoniae serotype 19F (strain G54) protein is UvrABC system protein B.